A 307-amino-acid chain; its full sequence is UPF0276 protein PM0211 (307 aa).

This sequence belongs to the UPF0276 family.

The chain is UPF0276 protein PM0211 from Pasteurella multocida (strain Pm70).